A 433-amino-acid polypeptide reads, in one-letter code: 3-phosphoshikimate 1-carboxyvinyltransferase (433 aa).

The 3-phosphoshikimate site is built by Lys-22, Ser-23, and Arg-27. Lys-22 is a binding site for phosphoenolpyruvate. Positions 95 and 123 each coordinate phosphoenolpyruvate. Residues Ser-166, Gln-168, Asp-314, and Lys-341 each contribute to the 3-phosphoshikimate site. Residue Gln-168 coordinates phosphoenolpyruvate. The Proton acceptor role is filled by Asp-314. Residues Arg-345 and Arg-386 each coordinate phosphoenolpyruvate.

It belongs to the EPSP synthase family. In terms of assembly, monomer.

Its subcellular location is the cytoplasm. The catalysed reaction is 3-phosphoshikimate + phosphoenolpyruvate = 5-O-(1-carboxyvinyl)-3-phosphoshikimate + phosphate. It functions in the pathway metabolic intermediate biosynthesis; chorismate biosynthesis; chorismate from D-erythrose 4-phosphate and phosphoenolpyruvate: step 6/7. In terms of biological role, catalyzes the transfer of the enolpyruvyl moiety of phosphoenolpyruvate (PEP) to the 5-hydroxyl of shikimate-3-phosphate (S3P) to produce enolpyruvyl shikimate-3-phosphate and inorganic phosphate. The chain is 3-phosphoshikimate 1-carboxyvinyltransferase from Acidithiobacillus ferrooxidans (strain ATCC 23270 / DSM 14882 / CIP 104768 / NCIMB 8455) (Ferrobacillus ferrooxidans (strain ATCC 23270)).